A 111-amino-acid polypeptide reads, in one-letter code: uncharacterized protein (111 aa).

Homodimer, or homotetramer.

This is an uncharacterized protein from Bacillus subtilis (strain 168).